We begin with the raw amino-acid sequence, 236 residues long: Ribosome maturation protein SDO1 homolog (236 aa).

Belongs to the SDO1/SBDS family.

The protein is Ribosome maturation protein SDO1 homolog of Pyrococcus horikoshii (strain ATCC 700860 / DSM 12428 / JCM 9974 / NBRC 100139 / OT-3).